The sequence spans 471 residues: Variant surface glycoprotein ILTAT 1.1BC (471 aa).

A signal peptide spans 1 to 21 (MVKAIASLMLLHIWAIEEIKA). Asn130 carries N-linked (GlcNAc...) asparagine glycosylation. A compositionally biased stretch (polar residues) spans 158 to 168 (TVSKTTECNTE). Disordered regions lie at residues 158–183 (TVSKTTECNTESPEDTKEPDQTTLSK) and 204–232 (GGACSAASSSDKIHITNETDSKNKGTTAS). Over residues 214–226 (DKIHITNETDSKN) the composition is skewed to basic and acidic residues. 2 N-linked (GlcNAc...) asparagine glycosylation sites follow: Asn220 and Asn260. Intrachain disulfides connect Cys397/Cys410 and Cys406/Cys421. The interval 432–454 (AEQAATNQETEGKDGKTTNTTGS) is disordered. Asn450 carries N-linked (GlcNAc...) asparagine glycosylation. A lipid anchor (GPI-anchor amidated serine) is attached at Ser454. A propeptide spans 455-471 (NSFLINKAPVLLAFLLL) (removed in mature form).

It is found in the cell membrane. In terms of biological role, VSG forms a coat on the surface of the parasite. The trypanosome evades the immune response of the host by expressing a series of antigenically distinct VSGs from an estimated 1000 VSG genes. The polypeptide is Variant surface glycoprotein ILTAT 1.1BC (Trypanosoma brucei brucei).